The chain runs to 134 residues: Ribosome-binding factor A (134 aa).

It belongs to the RbfA family. As to quaternary structure, monomer. Binds 30S ribosomal subunits, but not 50S ribosomal subunits or 70S ribosomes.

It is found in the cytoplasm. One of several proteins that assist in the late maturation steps of the functional core of the 30S ribosomal subunit. Associates with free 30S ribosomal subunits (but not with 30S subunits that are part of 70S ribosomes or polysomes). Required for efficient processing of 16S rRNA. May interact with the 5'-terminal helix region of 16S rRNA. The sequence is that of Ribosome-binding factor A from Rhizobium etli (strain CIAT 652).